A 506-amino-acid polypeptide reads, in one-letter code: Maturase K (506 aa).

This sequence belongs to the intron maturase 2 family. MatK subfamily.

The protein resides in the plastid. It localises to the chloroplast. Usually encoded in the trnK tRNA gene intron. Probably assists in splicing its own and other chloroplast group II introns. The chain is Maturase K from Medicago sativa (Alfalfa).